The sequence spans 204 residues: N-(5'-phosphoribosyl)anthranilate isomerase (204 aa).

It belongs to the TrpF family.

It catalyses the reaction N-(5-phospho-beta-D-ribosyl)anthranilate = 1-(2-carboxyphenylamino)-1-deoxy-D-ribulose 5-phosphate. Its pathway is amino-acid biosynthesis; L-tryptophan biosynthesis; L-tryptophan from chorismate: step 3/5. In Geobacter sp. (strain M21), this protein is N-(5'-phosphoribosyl)anthranilate isomerase.